The following is a 1102-amino-acid chain: Putative ISWI chromatin-remodeling complex subunit YPL216W (1102 aa).

The WAC domain occupies 23–131 (ETPWVIKESS…DTVCLKTIQK (109 aa)). The tract at residues 271–301 (ELYTPLTIPPESDVEPADWKETSETSETSET) is disordered. Residues 375–435 (QFPTERLLVV…FLKTYNSKGS (61 aa)) enclose the DDT domain. Positions 673 to 743 (CNGIRLKLDS…EDIAFLEAKL (71 aa)) form a coiled coil.

Its subcellular location is the nucleus. Functionally, may be required for the activity of an ISWI chromatin-remodeling complex. The chain is Putative ISWI chromatin-remodeling complex subunit YPL216W from Saccharomyces cerevisiae (strain ATCC 204508 / S288c) (Baker's yeast).